The chain runs to 311 residues: Solute carrier family 25 member 36 (311 aa).

Solcar repeat units follow at residues 4–108 (RDTL…CKEK), 116–203 (DSTQ…IKQK), and 224–308 (SDFV…VVYL). Transmembrane regions (helical) follow at residues 7 to 27 (LVHL…TCPL), 41 to 57 (LYIS…ASVN), 111 to 131 (GVFD…AGFT), 180 to 200 (MSAS…YESI), 226 to 246 (FVRM…IAYP), and 291 to 311 (QIPN…LLNG).

The protein belongs to the mitochondrial carrier (TC 2.A.29) family.

It is found in the mitochondrion inner membrane. The enzyme catalyses UTP(in) + CTP(out) = UTP(out) + CTP(in). It carries out the reaction CTP(out) + UDP(in) = CTP(in) + UDP(out). It catalyses the reaction UMP(in) + CTP(out) = UMP(out) + CTP(in). The catalysed reaction is dUTP(in) + CTP(out) = dUTP(out) + CTP(in). The enzyme catalyses dUMP(in) + CTP(out) = dUMP(out) + CTP(in). It carries out the reaction CDP(in) + CTP(out) = CDP(out) + CTP(in). It catalyses the reaction CTP(out) + CMP(in) = CTP(in) + CMP(out). The catalysed reaction is dCTP(in) + CTP(out) = dCTP(out) + CTP(in). The enzyme catalyses dCDP(in) + CTP(out) = dCDP(out) + CTP(in). It carries out the reaction dCMP(in) + CTP(out) = dCMP(out) + CTP(in). It catalyses the reaction GTP(in) + CTP(out) = GTP(out) + CTP(in). The catalysed reaction is CTP(out) + GDP(in) = CTP(in) + GDP(out). The enzyme catalyses GMP(in) + CTP(out) = GMP(out) + CTP(in). It carries out the reaction dGTP(in) + CTP(out) = dGTP(out) + CTP(in). It catalyses the reaction dGMP(in) + CTP(out) = dGMP(out) + CTP(in). The catalysed reaction is ITP(in) + CTP(out) = ITP(out) + CTP(in). The enzyme catalyses IDP(in) + CTP(out) = IDP(out) + CTP(in). It carries out the reaction IMP(in) + CTP(out) = IMP(out) + CTP(in). It catalyses the reaction CTP(out) = CTP(in). Its function is as follows. Mitochondrial transporter that imports/exports pyrimidine nucleotides into and from mitochondria. Selectively transports cytosine, guanosine, inosine and uridine (deoxy)nucleoside mono-, di-, and triphosphates by antiport mechanism. Catalyzes uniport at much lower rate. May import (deoxy)nucleoside triphosphates in exchange for intramitochondrial (deoxy)nucleoside mono- and diphosphates, thus providing precursors necessary for de novo synthesis of mitochondrial DNA and RNA while exporting products of their catabolism. Participates in mitochondrial genome maintenance, regulation of mitochondrial membrane potential and mitochondrial respiration. The protein is Solute carrier family 25 member 36 (Slc25a36) of Mus musculus (Mouse).